A 228-amino-acid polypeptide reads, in one-letter code: NAD(P)H-hydrate epimerase (228 aa).

The 201-residue stretch at 9–209 (VRAVERLAHR…LLGLTPAFLA (201 aa)) folds into the YjeF N-terminal domain. (6S)-NADPHX is bound at residue 53-57 (NNGGD). K(+)-binding residues include asparagine 54 and aspartate 115. (6S)-NADPHX contacts are provided by residues 119–125 (GIGLARP) and aspartate 148. Serine 151 contributes to the K(+) binding site.

The protein belongs to the NnrE/AIBP family. Requires K(+) as cofactor.

The enzyme catalyses (6R)-NADHX = (6S)-NADHX. It carries out the reaction (6R)-NADPHX = (6S)-NADPHX. Its function is as follows. Catalyzes the epimerization of the S- and R-forms of NAD(P)HX, a damaged form of NAD(P)H that is a result of enzymatic or heat-dependent hydration. This is a prerequisite for the S-specific NAD(P)H-hydrate dehydratase to allow the repair of both epimers of NAD(P)HX. This Bordetella parapertussis (strain 12822 / ATCC BAA-587 / NCTC 13253) protein is NAD(P)H-hydrate epimerase.